A 725-amino-acid chain; its full sequence is Heme/hemopexin utilization protein C (725 aa).

The N-terminal stretch at 1–21 (MRFSKLSLAIATTLVTANALA) is a signal peptide. The TBDR plug domain occupies 36–147 (DPSRFAYTPE…LGGVVAMRTP (112 aa)). The TBDR beta-barrel domain maps to 158–725 (KFGVKIRQGY…NAKISAVYSF (568 aa)). Positions 708 to 725 (SLMEGTGRNAKISAVYSF) match the TonB C-terminal box motif.

Belongs to the TonB-dependent receptor family.

It is found in the cell outer membrane. Required for utilization of free heme at low concentrations. This is Heme/hemopexin utilization protein C (hxuC) from Haemophilus influenzae.